The chain runs to 1090 residues: Nitrogen assimilation transcription factor nit-4 (1090 aa).

Residues 1 to 14 (MNSSDVQMMSSQDA) are compositionally biased toward polar residues. The disordered stretch occupies residues 1–43 (MNSSDVQMMSSQDAPGSAGLAPDNIASSLPSKKKSRRGADPTN). Residues 53 to 81 (CIACRRRKSKCDGALPSCAACASVYGTEC) constitute a DNA-binding region (zn(2)-C6 fungal-type). 6 disordered regions span residues 145 to 176 (RRDEKNATATNDNDDSDEPTQPGRDDATSQAV), 666 to 689 (FSTSEVPSPNRTAPSLAPSSPAPP), 773 to 798 (HQHHHHLQNQHQPQQPHHNHMTYQQQ), 825 to 875 (GIPT…VKPP), 936 to 999 (QGWD…QRQQ), and 1033 to 1053 (HGAERGGGGIESTGMGMTTVG). Positions 167–176 (GRDDATSQAV) are enriched in basic and acidic residues. Positions 666 to 677 (FSTSEVPSPNRT) are enriched in polar residues. A compositionally biased stretch (low complexity) spans 849 to 859 (QPQQQQQPQAQ). Composition is skewed to gly residues over residues 940–965 (LEGGGAGTATSTGGIGDGGGPTGGAG) and 976–988 (NIGGGGGGGGGST). The segment covering 990–999 (QRQQQQQRQQ) has biased composition (low complexity).

The protein resides in the nucleus. In terms of biological role, pathway-specific regulatory gene of nitrate assimilation; it activates the transcription of the genes for nitrate and nitrite reductases. The polypeptide is Nitrogen assimilation transcription factor nit-4 (nit-4) (Neurospora crassa (strain ATCC 24698 / 74-OR23-1A / CBS 708.71 / DSM 1257 / FGSC 987)).